The sequence spans 356 residues: Methylthioribose-1-phosphate isomerase (356 aa).

The active-site Proton donor is Asp-234.

The protein belongs to the eIF-2B alpha/beta/delta subunits family. MtnA subfamily.

It localises to the cytoplasm. The protein resides in the nucleus. The catalysed reaction is 5-(methylsulfanyl)-alpha-D-ribose 1-phosphate = 5-(methylsulfanyl)-D-ribulose 1-phosphate. It participates in amino-acid biosynthesis; L-methionine biosynthesis via salvage pathway; L-methionine from S-methyl-5-thio-alpha-D-ribose 1-phosphate: step 1/6. Its function is as follows. Catalyzes the interconversion of methylthioribose-1-phosphate (MTR-1-P) into methylthioribulose-1-phosphate (MTRu-1-P). This chain is Methylthioribose-1-phosphate isomerase (mri1), found in Schizosaccharomyces japonicus (strain yFS275 / FY16936) (Fission yeast).